Consider the following 55-residue polypeptide: Cicadin (55 aa).

The segment covering 1 to 26 (NEYHGFVDKANNENKRKKQQGRDDFV) has biased composition (basic and acidic residues). The segment at 1-39 (NEYHGFVDKANNENKRKKQQGRDDFVVKPNNFANRRRKD) is disordered.

Its function is as follows. Possesses antifungal activity against B.cinerea, M.arachidicola, F.oxysporum, R.solani and C.comatus. Suppresses the activity of HIV-1 reverse transcriptase and stimulates the proliferation of murine splenocytes. The polypeptide is Cicadin (Cicada flammata).